A 32-amino-acid polypeptide reads, in one-letter code: MSDIN-like toxin proprotein 1 (32 aa).

The propeptide occupies Met1 to Pro10. The segment at residues Ile11–Pro18 is a cross-link (cyclopeptide (Ile-Pro)). Residues Cys19–Arg32 constitute a propeptide that is removed on maturation.

The protein belongs to the MSDIN fungal toxin family. Processed by the macrocyclase-peptidase enzyme POPB to yield a toxic cyclic octapeptide. POPB first removes 10 residues from the N-terminus. Conformational trapping of the remaining peptide forces the enzyme to release this intermediate rather than proceed to macrocyclization. The enzyme rebinds the remaining peptide in a different conformation and catalyzes macrocyclization of the N-terminal 8 residues. In terms of tissue distribution, expressed in basidiocarps.

Functionally, probable toxin that belongs to the MSDIN-like toxin family responsible for a large number of food poisoning cases and deaths. This chain is MSDIN-like toxin proprotein 1, found in Amanita exitialis (Guangzhou destroying angel).